The primary structure comprises 350 residues: Biotin synthase (350 aa).

A Radical SAM core domain is found at 38 to 265; the sequence is NHVQVSTLLS…MSAVRLSAGR (228 aa). The [4Fe-4S] cluster site is built by Cys-53, Cys-57, and Cys-60. Residues Cys-97, Cys-128, Cys-188, and Arg-260 each coordinate [2Fe-2S] cluster.

It belongs to the radical SAM superfamily. Biotin synthase family. As to quaternary structure, homodimer. It depends on [4Fe-4S] cluster as a cofactor. Requires [2Fe-2S] cluster as cofactor.

It carries out the reaction (4R,5S)-dethiobiotin + (sulfur carrier)-SH + 2 reduced [2Fe-2S]-[ferredoxin] + 2 S-adenosyl-L-methionine = (sulfur carrier)-H + biotin + 2 5'-deoxyadenosine + 2 L-methionine + 2 oxidized [2Fe-2S]-[ferredoxin]. It participates in cofactor biosynthesis; biotin biosynthesis; biotin from 7,8-diaminononanoate: step 2/2. Catalyzes the conversion of dethiobiotin (DTB) to biotin by the insertion of a sulfur atom into dethiobiotin via a radical-based mechanism. This chain is Biotin synthase, found in Vibrio atlanticus (strain LGP32) (Vibrio splendidus (strain Mel32)).